We begin with the raw amino-acid sequence, 409 residues long: Dihydrolipoyllysine-residue succinyltransferase component of 2-oxoglutarate dehydrogenase complex (409 aa).

The 76-residue stretch at 2–77 (AIEILVPDLP…VSKQLLGKIS (76 aa)) folds into the Lipoyl-binding domain. Position 43 is an N6-lipoyllysine (K43). Over residues 83–107 (DVSSATLKATNEPTPSDRQNAAIEN) the composition is skewed to polar residues. Residues 83–114 (DVSSATLKATNEPTPSDRQNAAIENSHNHNAD) are disordered. The region spanning 114–151 (DQSPVIRRLLAEHDLQADQIQGSGVGGRLTREDIEREI) is the Peripheral subunit-binding (PSBD) domain. Catalysis depends on residues H380 and D384.

The protein belongs to the 2-oxoacid dehydrogenase family. Forms a 24-polypeptide structural core with octahedral symmetry. Part of the 2-oxoglutarate dehydrogenase (OGDH) complex composed of E1 (2-oxoglutarate dehydrogenase), E2 (dihydrolipoamide succinyltransferase) and E3 (dihydrolipoamide dehydrogenase); the complex contains multiple copies of the three enzymatic components (E1, E2 and E3). (R)-lipoate serves as cofactor.

The catalysed reaction is N(6)-[(R)-dihydrolipoyl]-L-lysyl-[protein] + succinyl-CoA = N(6)-[(R)-S(8)-succinyldihydrolipoyl]-L-lysyl-[protein] + CoA. Its pathway is amino-acid degradation; L-lysine degradation via saccharopine pathway; glutaryl-CoA from L-lysine: step 6/6. In terms of biological role, E2 component of the 2-oxoglutarate dehydrogenase (OGDH) complex which catalyzes the second step in the conversion of 2-oxoglutarate to succinyl-CoA and CO(2). The sequence is that of Dihydrolipoyllysine-residue succinyltransferase component of 2-oxoglutarate dehydrogenase complex (sucB) from Haemophilus influenzae (strain ATCC 51907 / DSM 11121 / KW20 / Rd).